A 718-amino-acid polypeptide reads, in one-letter code: Putative proline-rich receptor-like protein kinase PERK11 (718 aa).

The segment at 1–256 (MDKVQQQADL…GGTSQQSNES (256 aa)) is disordered. Over 1 to 262 (MDKVQQQADL…SNESNYTEKT (262 aa)) the chain is Extracellular. 3 stretches are compositionally biased toward pro residues: residues 45-105 (ATSP…PPQS), 115-132 (IPFPKPQLPPPSLFPPPS), and 157-167 (LPSPPSTPFSP). 2 stretches are compositionally biased toward low complexity: residues 168 to 203 (PSQENSGSQGSPPLSSLLPPMLPLNPNSPGNPLQPL) and 211 to 244 (SNRVPSSSSSPSPPSLSGSNNHSGGSNRHNANSN). Residues Asn-231, Asn-254, and Asn-257 are each glycosylated (N-linked (GlcNAc...) asparagine). Residues 263 to 283 (VIGIGIAGVLVILFIAGVFFV) traverse the membrane as a helical segment. The Cytoplasmic portion of the chain corresponds to 284-718 (RRKQKKGSSS…RAFNTSHRNH (435 aa)). Residues 314–348 (HYRQKPGNGNSSAQNSSPDTNSLGNPKHGRGTPDS) form a disordered region. Over residues 320 to 337 (GNGNSSAQNSSPDTNSLG) the composition is skewed to polar residues. Thr-359 carries the post-translational modification Phosphothreonine. Residues 370-649 (FCKSFVVGEG…VRALDTRDDL (280 aa)) form the Protein kinase domain. Residues 376-384 (VGEGGFGCV) and Lys-398 each bind ATP. Tyr-443 is subject to Phosphotyrosine. The active-site Proton acceptor is the Asp-494. Residues Ser-498 and Ser-527 each carry the phosphoserine modification. 2 positions are modified to phosphothreonine: Thr-528 and Thr-533. Tyr-541 carries the post-translational modification Phosphotyrosine. Positions 683-718 (SSDLGTNTGYYPSQDYATSHEYESESRAFNTSHRNH) are disordered. 2 stretches are compositionally biased toward polar residues: residues 685-699 (DLGTNTGYYPSQDYA) and 709-718 (RAFNTSHRNH).

This sequence belongs to the protein kinase superfamily. Ser/Thr protein kinase family. Mostly expressed in flower buds.

It localises to the cell membrane. The enzyme catalyses L-seryl-[protein] + ATP = O-phospho-L-seryl-[protein] + ADP + H(+). The catalysed reaction is L-threonyl-[protein] + ATP = O-phospho-L-threonyl-[protein] + ADP + H(+). The chain is Putative proline-rich receptor-like protein kinase PERK11 (PERK11) from Arabidopsis thaliana (Mouse-ear cress).